The sequence spans 606 residues: UvrABC system protein C (606 aa).

Residues glutamine 14–valine 93 enclose the GIY-YIG domain. The region spanning proline 203–threonine 238 is the UVR domain.

It belongs to the UvrC family. In terms of assembly, interacts with UvrB in an incision complex.

It is found in the cytoplasm. In terms of biological role, the UvrABC repair system catalyzes the recognition and processing of DNA lesions. UvrC both incises the 5' and 3' sides of the lesion. The N-terminal half is responsible for the 3' incision and the C-terminal half is responsible for the 5' incision. The protein is UvrABC system protein C of Desulforapulum autotrophicum (strain ATCC 43914 / DSM 3382 / VKM B-1955 / HRM2) (Desulfobacterium autotrophicum).